The sequence spans 496 residues: MDDKQHTSSSDDERAEIATSNQDQQTNSSKRVHLKRWQFISILIGTILITAVITVVAYIFINQKINGLNKTDQANLNKIENVYKILNSDYYKKQSSDKLSKAAIDGMVKELKDPYSEYLTKEQTKSFNEGVSGDFVGIGAEMQKKNDQIMVTSPMKGSPAERAGIRPKDVITKVNGKSIKGKALDEVVKDVRGKENTEVTLTVQRGSEEKDVKIKREKIHVKSVEYKKKGKVGVITINKFQNDTSGELKDAVLKAHKDGLKKIVLDLRNNPGGLLDEAVKMANIFIDKGKTVVKLEKGKDTEAIQTSNDALKEAKDMDISILVNEGSASASEVFTGALKDYNKAKVYGSKTFGKGVVQTTREFKDGSLLKYTEMKWLTPDGHYIHGKGIKPDVTIDTPKYQSLNVIPNTKTFKVGDDDKNIKTIKIGLSALGYKVDNESTQFDQALENQVKAFQQTNKLEVTGEFNKETNNKFTELLVEKANKHDDVLDKLINILK.

Over residues Met-1 to Glu-16 the composition is skewed to basic and acidic residues. Residues Met-1–Asn-27 are disordered. Over residues Ala-18–Asn-27 the composition is skewed to polar residues. A helical transmembrane segment spans residues Phe-39–Ile-59. Residues Thr-124–Gly-206 enclose the PDZ domain. Catalysis depends on charge relay system residues Ser-329, Asp-340, and Lys-354.

This sequence belongs to the peptidase S41A family.

It is found in the cell membrane. This is Probable CtpA-like serine protease from Staphylococcus aureus (strain bovine RF122 / ET3-1).